Reading from the N-terminus, the 356-residue chain is Glutenin, low molecular weight subunit (356 aa).

The signal sequence occupies residues 1–19 (MKTFLVFALLALAAASAVA). The disordered stretch occupies residues 20 to 179 (QISQQQQAPP…LQQQRPPFSR (160 aa)).

Belongs to the gliadin/glutenin family. In terms of assembly, disulfide-bridge linked aggregates.

Functionally, glutenins are high-molecular weight seed storage proteins of wheat endosperm. Thought to be responsible for the visco-elastic property of wheat dough. This chain is Glutenin, low molecular weight subunit, found in Triticum aestivum (Wheat).